The primary structure comprises 284 residues: Aldo-keto reductase MAV_3816 (284 aa).

The Proton donor role is filled by Tyr59. Leu199, Ile237, Arg239, Ser240, Ala241, Ser248, and Arg275 together coordinate NADPH.

It belongs to the aldo/keto reductase family.

This chain is Aldo-keto reductase MAV_3816, found in Mycobacterium avium (strain 104).